A 265-amino-acid chain; its full sequence is Energy-coupling factor transporter transmembrane protein EcfT (265 aa).

The next 6 helical transmembrane spans lie at 29–49 (VMAF…ALMF), 63–83 (FLFF…TLLL), 94–114 (LVDL…AMMF), 117–137 (FVLI…IELT), 143–163 (ILAP…MLSI), and 243–263 (RFAD…LFWL).

Belongs to the energy-coupling factor EcfT family. As to quaternary structure, forms a stable energy-coupling factor (ECF) transporter complex composed of 2 membrane-embedded substrate-binding proteins (S component), 2 ATP-binding proteins (A component) and 2 transmembrane proteins (T component). May be able to interact with more than 1 S component at a time.

The protein localises to the cell membrane. Its function is as follows. Transmembrane (T) component of an energy-coupling factor (ECF) ABC-transporter complex. Unlike classic ABC transporters this ECF transporter provides the energy necessary to transport a number of different substrates. In Listeria innocua serovar 6a (strain ATCC BAA-680 / CLIP 11262), this protein is Energy-coupling factor transporter transmembrane protein EcfT.